A 55-amino-acid chain; its full sequence is Conotoxin vc5b (55 aa).

The signal sequence occupies residues 1-15; the sequence is VILLLLIASAPSVDA. Residues 16–41 constitute a propeptide that is removed on maturation; it reads QPKTKDDVPLAPLHDNAKSALQHLNQ. Q53 bears the Glutamine amide mark.

Contains 2 disulfide bonds that can be either 'C1-C3, C2-C4' or 'C1-C4, C2-C3', since these disulfide connectivities have been observed for conotoxins with cysteine framework V (for examples, see AC P0DQQ7 and AC P81755). In terms of tissue distribution, expressed by the venom duct.

The protein resides in the secreted. The chain is Conotoxin vc5b from Conus victoriae (Queen Victoria cone).